Reading from the N-terminus, the 541-residue chain is Glucose-6-phosphate isomerase (541 aa).

E346 acts as the Proton donor in catalysis. Residues H377 and K506 contribute to the active site.

The protein belongs to the GPI family.

It localises to the cytoplasm. The catalysed reaction is alpha-D-glucose 6-phosphate = beta-D-fructose 6-phosphate. The protein operates within carbohydrate biosynthesis; gluconeogenesis. It functions in the pathway carbohydrate degradation; glycolysis; D-glyceraldehyde 3-phosphate and glycerone phosphate from D-glucose: step 2/4. Catalyzes the reversible isomerization of glucose-6-phosphate to fructose-6-phosphate. This Rhizobium leguminosarum bv. trifolii (strain WSM2304) protein is Glucose-6-phosphate isomerase.